The primary structure comprises 85 residues: U4-theraphotoxin-Hhn1s (85 aa).

The first 22 residues, 1–22, serve as a signal peptide directing secretion; sequence MKVTLIAILTCAAVLVLHTTAA. A propeptide spanning residues 23-48 is cleaved from the precursor; sequence EELEAESQLMEVGMPDTELAAVDEER. 3 cysteine pairs are disulfide-bonded: Cys-52–Cys-66, Cys-56–Cys-77, and Cys-71–Cys-82.

The protein belongs to the neurotoxin 12 (Hwtx-2) family. 02 (Hwtx-2) subfamily. In terms of tissue distribution, expressed by the venom gland.

Its subcellular location is the secreted. Functionally, postsynaptic neurotoxin. The protein is U4-theraphotoxin-Hhn1s of Cyriopagopus hainanus (Chinese bird spider).